The chain runs to 447 residues: ATP-dependent protease ATPase subunit HslU (447 aa).

ATP-binding positions include isoleucine 17, 59–64 (GVGKTE), aspartate 256, glutamate 321, and arginine 393.

This sequence belongs to the ClpX chaperone family. HslU subfamily. As to quaternary structure, a double ring-shaped homohexamer of HslV is capped on each side by a ring-shaped HslU homohexamer. The assembly of the HslU/HslV complex is dependent on binding of ATP.

It is found in the cytoplasm. ATPase subunit of a proteasome-like degradation complex; this subunit has chaperone activity. The binding of ATP and its subsequent hydrolysis by HslU are essential for unfolding of protein substrates subsequently hydrolyzed by HslV. HslU recognizes the N-terminal part of its protein substrates and unfolds these before they are guided to HslV for hydrolysis. This Pseudomonas entomophila (strain L48) protein is ATP-dependent protease ATPase subunit HslU.